Reading from the N-terminus, the 726-residue chain is Amino-acid acetyltransferase, mitochondrial (726 aa).

Residues 1–18 (MSSRTLVGLRSTTSTHLQ) are compositionally biased toward polar residues. The N-terminal 44 residues, 1–44 (MSSRTLVGLRSTTSTHLQRSGVAAAAAVSSSSTSSSGSAPRRCL), are a transit peptide targeting the mitochondrion. Positions 1 to 64 (MSSRTLVGLR…SAEFSSSSKS (64 aa)) are disordered. Low complexity predominate over residues 20–39 (SGVAAAAAVSSSSTSSSGSA). Residues 45 to 58 (SSASGRQVQQSAEF) show a composition bias toward polar residues. Residues 547–716 (DRPRLGLDDP…YEAVCRSIQP (170 aa)) form the N-acetyltransferase domain.

The protein belongs to the acetyltransferase family.

The protein localises to the mitochondrion. It carries out the reaction L-glutamate + acetyl-CoA = N-acetyl-L-glutamate + CoA + H(+). The protein operates within amino-acid biosynthesis; L-arginine biosynthesis; N(2)-acetyl-L-ornithine from L-glutamate: step 1/4. Functionally, N-acetylglutamate synthase involved in arginine biosynthesis. This is Amino-acid acetyltransferase, mitochondrial (arg2) from Aspergillus niger (strain ATCC MYA-4892 / CBS 513.88 / FGSC A1513).